A 101-amino-acid chain; its full sequence is NAD(P)H-quinone oxidoreductase subunit 4L, chloroplastic (101 aa).

The next 3 membrane-spanning stretches (helical) occupy residues 2-22 (ILEH…YGLI), 32-52 (MCLE…SDFF), and 61-81 (IFCI…LAIV).

Belongs to the complex I subunit 4L family. In terms of assembly, NDH is composed of at least 16 different subunits, 5 of which are encoded in the nucleus.

Its subcellular location is the plastid. It localises to the chloroplast thylakoid membrane. It carries out the reaction a plastoquinone + NADH + (n+1) H(+)(in) = a plastoquinol + NAD(+) + n H(+)(out). The catalysed reaction is a plastoquinone + NADPH + (n+1) H(+)(in) = a plastoquinol + NADP(+) + n H(+)(out). In terms of biological role, NDH shuttles electrons from NAD(P)H:plastoquinone, via FMN and iron-sulfur (Fe-S) centers, to quinones in the photosynthetic chain and possibly in a chloroplast respiratory chain. The immediate electron acceptor for the enzyme in this species is believed to be plastoquinone. Couples the redox reaction to proton translocation, and thus conserves the redox energy in a proton gradient. This is NAD(P)H-quinone oxidoreductase subunit 4L, chloroplastic from Arabidopsis thaliana (Mouse-ear cress).